A 169-amino-acid polypeptide reads, in one-letter code: Diuretic hormone 44 (169 aa).

Residues 1–18 form the signal peptide; it reads MILLGILASTTIIGLTSS. Residues 19–96 constitute a propeptide that is removed on maturation; sequence APLSSYERRD…ARRKQERDQR (78 aa). A coiled-coil region spans residues 83-108; it reads MLELARRKQERDQRQIEENRRFLENI. A Pyrrolidone carboxylic acid modification is found at Q97. I108 carries the isoleucine amide modification. Residues 109-169 constitute a propeptide that is removed on maturation; the sequence is GKRSVPVSDA…RVQANELRLL (61 aa).

Post-translationally, residues Ile-66 to Gly-109 may constitute another form of the DH44 peptide, which has not been detected yet. In terms of tissue distribution, expressed in brain, ventral ganglia and the retrocerebral complex (at protein level).

It localises to the secreted. Regulation of fluid secretion. This chain is Diuretic hormone 44, found in Camponotus floridanus (Florida carpenter ant).